An 80-amino-acid polypeptide reads, in one-letter code: RNA-binding protein Hfq (80 aa).

In terms of domain architecture, Sm spans 10-69; it reads DPFLNALRKEHVPVSIYLVNGIKLQGNIESFDQYVVLLRNTVTQMVYKHAISTVVPARPV.

Belongs to the Hfq family. In terms of assembly, homohexamer.

In terms of biological role, RNA chaperone that binds small regulatory RNA (sRNAs) and mRNAs to facilitate mRNA translational regulation in response to envelope stress, environmental stress and changes in metabolite concentrations. Also binds with high specificity to tRNAs. The chain is RNA-binding protein Hfq from Burkholderia ambifaria (strain ATCC BAA-244 / DSM 16087 / CCUG 44356 / LMG 19182 / AMMD) (Burkholderia cepacia (strain AMMD)).